We begin with the raw amino-acid sequence, 546 residues long: MSSYFFTHFALHTIGTLGGVIPDFPWLSVSILFPIGCAFLIPFFPDKGEGKEVRWFALSVALITFLVTVGSYINGFDINNEDVQLKESINWLPNLGLTWSVGADGMSMPLILLTSFITALAVLAAWPVKFKPKLFFFLILIMDGGQIAVFAVQDMLLFFLSWELELLPVYLLLAIWGGKNRQYAATKFIIYTAGSSIFILLAALAMGFYGTEVPNFEFSHLANQDFGQNFQILCYIGLLIAFGVKLPIVPLHTWLPDAHGEATAPVHMLLAGILLKMGGYALLRFNAQLLPIAHAQFSPLLIVLGVVNIIYAALTSFAQRNLKRKIAYSSISHMGFVLIGIGSFSSLGTSGAMLQMVSHGLIGASLFFLVGATYDRTKTLKLDEMGGVGQKMRIMFALWTACSLASLALPGMSGFVSELMVFTGFVTDEVYTLPFRVIMASLAAIGVILTPIYLLSMLREIFFGKENPKLTEDKNLIDAEPREIYIIACLLLPIIGIGLYPRLVTESYLATINNLVDRDLNAVKNIPKTNVFAGNKSNQILKAPTI.

14 helical membrane-spanning segments follow: residues Phe-24–Phe-44, Phe-56–Phe-76, Met-108–Val-128, Pro-132–Val-152, Leu-156–Trp-176, Phe-188–Phe-208, Ile-232–His-252, Thr-263–Leu-283, Phe-297–Phe-317, Ile-326–Ser-346, Ala-352–Ala-372, Phe-396–Val-416, Val-437–Met-457, and Ile-484–Val-504.

It belongs to the complex I subunit 4 family.

It localises to the cellular thylakoid membrane. The enzyme catalyses a plastoquinone + NADH + (n+1) H(+)(in) = a plastoquinol + NAD(+) + n H(+)(out). It catalyses the reaction a plastoquinone + NADPH + (n+1) H(+)(in) = a plastoquinol + NADP(+) + n H(+)(out). Functionally, NDH-1 shuttles electrons from NAD(P)H, via FMN and iron-sulfur (Fe-S) centers, to quinones in the respiratory chain. The immediate electron acceptor for the enzyme in this species is believed to be plastoquinone. Couples the redox reaction to proton translocation (for every two electrons transferred, four hydrogen ions are translocated across the cytoplasmic membrane), and thus conserves the redox energy in a proton gradient. This chain is NAD(P)H-quinone oxidoreductase chain 4, found in Prochlorococcus marinus subsp. pastoris (strain CCMP1986 / NIES-2087 / MED4).